We begin with the raw amino-acid sequence, 218 residues long: Cold-regulated protein 28 (218 aa).

Disordered stretches follow at residues 1 to 51 and 166 to 218; these read MEND…ADSK and TKHS…KPRT. The span at 20 to 37 shows a compositional bias: low complexity; sequence EASAESQSESTLSNSLDS. Over residues 186 to 207 the composition is skewed to basic and acidic residues; the sequence is GEVSKKREREANNDDSSLKEDQ.

It localises to the nucleus. In terms of biological role, together with COR27, involved in central circadian clock regulation and in flowering promotion, by binding to the chromatin of clock-associated evening genes TOC1, PRR5, ELF4 and cold-responsive genes in order to repress their transcription. Negative regulator of freezing tolerance. The polypeptide is Cold-regulated protein 28 (Arabidopsis thaliana (Mouse-ear cress)).